A 744-amino-acid polypeptide reads, in one-letter code: Elongation factor G, mitochondrial (744 aa).

Residues 1-25 (MTISCLLRIRPALAKSFFENGQRAF) constitute a mitochondrion transit peptide. In terms of domain architecture, tr-type G spans 38–315 (ERIRNIGISA…AVLDYLPNPG (278 aa)). Residues 47–54 (AHIDSGKT), 114–118 (DTPGH), and 168–171 (NKLD) each bind GTP.

It belongs to the TRAFAC class translation factor GTPase superfamily. Classic translation factor GTPase family. EF-G/EF-2 subfamily.

The protein resides in the mitochondrion. The protein operates within protein biosynthesis; polypeptide chain elongation. Functionally, mitochondrial GTPase that catalyzes the GTP-dependent ribosomal translocation step during translation elongation. During this step, the ribosome changes from the pre-translocational (PRE) to the post-translocational (POST) state as the newly formed A-site-bound peptidyl-tRNA and P-site-bound deacylated tRNA move to the P and E sites, respectively. Catalyzes the coordinated movement of the two tRNA molecules, the mRNA and conformational changes in the ribosome. In Culex quinquefasciatus (Southern house mosquito), this protein is Elongation factor G, mitochondrial.